The chain runs to 53 residues: Rubredoxin-1 (53 aa).

One can recognise a Rubredoxin-like domain in the interval 1–53; it reads MEKFVCDVCGYIYDPVVGDPDNGVAPGTKFKDIPDTWVCPLCKLDKTHFSKVE. Cysteine 6, cysteine 9, cysteine 39, and cysteine 42 together coordinate Fe cation.

It belongs to the rubredoxin family. Requires Fe(3+) as cofactor.

Rubredoxin is a small nonheme, iron protein lacking acid-labile sulfide. Its single Fe, chelated to 4 Cys, functions as an electron acceptor and may also stabilize the conformation of the molecule. This chain is Rubredoxin-1 (rubR1), found in Clostridium perfringens (strain 13 / Type A).